The following is a 181-amino-acid chain: Large ribosomal subunit protein uL6 (181 aa).

Belongs to the universal ribosomal protein uL6 family. In terms of assembly, part of the 50S ribosomal subunit.

In terms of biological role, this protein binds to the 23S rRNA, and is important in its secondary structure. It is located near the subunit interface in the base of the L7/L12 stalk, and near the tRNA binding site of the peptidyltransferase center. The chain is Large ribosomal subunit protein uL6 from Ruthia magnifica subsp. Calyptogena magnifica.